We begin with the raw amino-acid sequence, 454 residues long: tRNA modification GTPase MnmE (454 aa).

(6S)-5-formyl-5,6,7,8-tetrahydrofolate is bound by residues R23, E80, and K120. One can recognise a TrmE-type G domain in the interval 216-377 (GMKVVIAGRP…LRNHLKQSMG (162 aa)). Residue N226 participates in K(+) binding. GTP-binding positions include 226–231 (NAGKSS), 245–251 (TDIAGTT), 270–273 (DTAG), 335–338 (NKAD), and 358–360 (SAR). S230 is a Mg(2+) binding site. The K(+) site is built by T245, I247, and T250. Mg(2+) is bound at residue T251. K454 provides a ligand contact to (6S)-5-formyl-5,6,7,8-tetrahydrofolate.

The protein belongs to the TRAFAC class TrmE-Era-EngA-EngB-Septin-like GTPase superfamily. TrmE GTPase family. In terms of assembly, homodimer. Heterotetramer of two MnmE and two MnmG subunits. K(+) serves as cofactor.

The protein resides in the cytoplasm. Its function is as follows. Exhibits a very high intrinsic GTPase hydrolysis rate. Involved in the addition of a carboxymethylaminomethyl (cmnm) group at the wobble position (U34) of certain tRNAs, forming tRNA-cmnm(5)s(2)U34. This chain is tRNA modification GTPase MnmE, found in Escherichia coli O17:K52:H18 (strain UMN026 / ExPEC).